Here is a 486-residue protein sequence, read N- to C-terminus: UDP-N-acetylmuramate--L-alanine ligase (486 aa).

G123–T129 is an ATP binding site.

It belongs to the MurCDEF family.

It localises to the cytoplasm. It catalyses the reaction UDP-N-acetyl-alpha-D-muramate + L-alanine + ATP = UDP-N-acetyl-alpha-D-muramoyl-L-alanine + ADP + phosphate + H(+). The protein operates within cell wall biogenesis; peptidoglycan biosynthesis. Cell wall formation. The chain is UDP-N-acetylmuramate--L-alanine ligase from Pseudomonas syringae pv. syringae (strain B728a).